The chain runs to 153 residues: Large ribosomal subunit protein uL22 (153 aa).

The disordered stretch occupies residues 125–153 (EPKEARQARKKAKSGRPAAAAKSETEKGA).

It belongs to the universal ribosomal protein uL22 family. In terms of assembly, part of the 50S ribosomal subunit.

This protein binds specifically to 23S rRNA; its binding is stimulated by other ribosomal proteins, e.g. L4, L17, and L20. It is important during the early stages of 50S assembly. It makes multiple contacts with different domains of the 23S rRNA in the assembled 50S subunit and ribosome. In terms of biological role, the globular domain of the protein is located near the polypeptide exit tunnel on the outside of the subunit, while an extended beta-hairpin is found that lines the wall of the exit tunnel in the center of the 70S ribosome. The polypeptide is Large ribosomal subunit protein uL22 (Cutibacterium acnes (strain DSM 16379 / KPA171202) (Propionibacterium acnes)).